The primary structure comprises 159 residues: SsrA-binding protein (159 aa).

The disordered stretch occupies residues K134 to A159.

This sequence belongs to the SmpB family.

It is found in the cytoplasm. Its function is as follows. Required for rescue of stalled ribosomes mediated by trans-translation. Binds to transfer-messenger RNA (tmRNA), required for stable association of tmRNA with ribosomes. tmRNA and SmpB together mimic tRNA shape, replacing the anticodon stem-loop with SmpB. tmRNA is encoded by the ssrA gene; the 2 termini fold to resemble tRNA(Ala) and it encodes a 'tag peptide', a short internal open reading frame. During trans-translation Ala-aminoacylated tmRNA acts like a tRNA, entering the A-site of stalled ribosomes, displacing the stalled mRNA. The ribosome then switches to translate the ORF on the tmRNA; the nascent peptide is terminated with the 'tag peptide' encoded by the tmRNA and targeted for degradation. The ribosome is freed to recommence translation, which seems to be the essential function of trans-translation. This is SsrA-binding protein from Marinomonas sp. (strain MWYL1).